A 150-amino-acid chain; its full sequence is D-aminoacyl-tRNA deacylase (150 aa).

The Gly-cisPro motif, important for rejection of L-amino acids signature appears at 138 to 139 (GP).

This sequence belongs to the DTD family. In terms of assembly, homodimer.

The protein resides in the cytoplasm. The catalysed reaction is glycyl-tRNA(Ala) + H2O = tRNA(Ala) + glycine + H(+). It catalyses the reaction a D-aminoacyl-tRNA + H2O = a tRNA + a D-alpha-amino acid + H(+). An aminoacyl-tRNA editing enzyme that deacylates mischarged D-aminoacyl-tRNAs. Also deacylates mischarged glycyl-tRNA(Ala), protecting cells against glycine mischarging by AlaRS. Acts via tRNA-based rather than protein-based catalysis; rejects L-amino acids rather than detecting D-amino acids in the active site. By recycling D-aminoacyl-tRNA to D-amino acids and free tRNA molecules, this enzyme counteracts the toxicity associated with the formation of D-aminoacyl-tRNA entities in vivo and helps enforce protein L-homochirality. This Thermosipho melanesiensis (strain DSM 12029 / CIP 104789 / BI429) protein is D-aminoacyl-tRNA deacylase.